A 1237-amino-acid polypeptide reads, in one-letter code: Zinc finger protein ZFAT (1237 aa).

The segment at Phe12–His35 adopts a C2H2-type 1 zinc-finger fold. A disordered region spans residues Arg50 to Arg110. Over residues Met70–Thr81 the composition is skewed to basic residues. The C2H2-type 2; degenerate zinc finger occupies Leu116–Asn141. The tract at residues Gly147–Glu188 is disordered. Residues Asp156 to Gly186 are compositionally biased toward basic and acidic residues. C2H2-type zinc fingers lie at residues Phe271–His293, Tyr299–His321, Phe326–His349, Gln354–His377, Tyr404–His426, Phe432–His454, and Tyr458–His481. Zn(2+)-binding residues include Cys273, Cys276, His289, His293, Cys301, Cys304, His317, His321, Cys328, Cys331, His344, His349, Cys356, Cys359, His372, His377, Cys406, Cys409, His422, and His426. Zn(2+)-binding residues include Cys460, Cys463, His476, and His481. 2 disordered regions span residues Val551–Cys576 and Ser601–Ala671. Residues Thr565–Ser574 show a composition bias toward polar residues. Positions Ser601–Asp617 are enriched in low complexity. 4 C2H2-type zinc fingers span residues Leu737–His759, Tyr765–His788, Leu793–His817, and Tyr825–His848. The Zn(2+) site is built by Cys767, Cys770, His783, His788, Cys795, Cys800, His813, His817, Cys827, Cys830, His843, His848, Cys877, Cys880, His894, His898, Cys906, Cys909, His922, His926, Cys934, Cys937, His950, and Leu953. Residues Met875–His898 form a C2H2-type 14; degenerate zinc finger. C2H2-type zinc fingers lie at residues Phe904 to His926, His932 to His954, Phe961 to His983, Phe989 to His1012, and Leu1036 to His1059.

Detected in spleen and thymus but not in liver, muscle, heart, kidney, brain, bone marrow or pancreas. Expressed in CD19+, CD4+ and CD8+ lymphocytes but not in CD11b+ lymphocytes or peritoneal macrophages (at protein level).

Its subcellular location is the nucleus. It is found in the cytoplasm. It localises to the cytosol. May be involved in transcriptional regulation. Overexpression causes down-regulation of a number of genes involved in the immune response. Some genes are also up-regulated. This chain is Zinc finger protein ZFAT (Zfat), found in Mus musculus (Mouse).